We begin with the raw amino-acid sequence, 383 residues long: Putative glutamate--cysteine ligase 2-2 (383 aa).

Residues 35 to 56 (RGDRDGAGGPPGGADPDGDLDG) are disordered.

The protein belongs to the glutamate--cysteine ligase type 2 family. YbdK subfamily.

It carries out the reaction L-cysteine + L-glutamate + ATP = gamma-L-glutamyl-L-cysteine + ADP + phosphate + H(+). Functionally, ATP-dependent carboxylate-amine ligase which exhibits weak glutamate--cysteine ligase activity. The chain is Putative glutamate--cysteine ligase 2-2 from Frankia alni (strain DSM 45986 / CECT 9034 / ACN14a).